We begin with the raw amino-acid sequence, 435 residues long: ATP-dependent protease ATPase subunit HslU (435 aa).

ATP is bound by residues V18, 60–65, D248, E313, and R385; that span reads GVGKTE.

It belongs to the ClpX chaperone family. HslU subfamily. As to quaternary structure, a double ring-shaped homohexamer of HslV is capped on each side by a ring-shaped HslU homohexamer. The assembly of the HslU/HslV complex is dependent on binding of ATP.

It localises to the cytoplasm. ATPase subunit of a proteasome-like degradation complex; this subunit has chaperone activity. The binding of ATP and its subsequent hydrolysis by HslU are essential for unfolding of protein substrates subsequently hydrolyzed by HslV. HslU recognizes the N-terminal part of its protein substrates and unfolds these before they are guided to HslV for hydrolysis. The chain is ATP-dependent protease ATPase subunit HslU from Azorhizobium caulinodans (strain ATCC 43989 / DSM 5975 / JCM 20966 / LMG 6465 / NBRC 14845 / NCIMB 13405 / ORS 571).